Consider the following 145-residue polypeptide: Basic phospholipase A2 PC17 (145 aa).

Residues 1-21 (MYPAHLLVLLAVCVSLLGASA) form the signal peptide. Residues 22-27 (ISNQPR) constitute a propeptide that is removed on maturation. Cystine bridges form between C38-C98, C54-C144, C56-C72, C71-C125, C78-C118, C87-C111, and C105-C116. Residues Y55, G57, and G59 each contribute to the Ca(2+) site. H75 is a catalytic residue. D76 lines the Ca(2+) pocket. Residue D119 is part of the active site.

The protein belongs to the phospholipase A2 family. Group I subfamily. D49 sub-subfamily. Ca(2+) is required as a cofactor. In terms of tissue distribution, expressed by the venom gland.

It localises to the secreted. The catalysed reaction is a 1,2-diacyl-sn-glycero-3-phosphocholine + H2O = a 1-acyl-sn-glycero-3-phosphocholine + a fatty acid + H(+). Snake venom phospholipase A2 (PLA2) that inhibits neuromuscular transmission by blocking acetylcholine release from the nerve termini. PLA2 catalyzes the calcium-dependent hydrolysis of the 2-acyl groups in 3-sn-phosphoglycerides. The sequence is that of Basic phospholipase A2 PC17 from Laticauda colubrina (Yellow-lipped sea krait).